Consider the following 210-residue polypeptide: Fibrillarin-like rRNA/tRNA 2'-O-methyltransferase (210 aa).

Residues 70 to 71 (TT), 88 to 89 (EY), 113 to 114 (DA), and 133 to 136 (DIAQ) each bind S-adenosyl-L-methionine.

The protein belongs to the methyltransferase superfamily. Fibrillarin family. Interacts with nop5. Component of box C/D small ribonucleoprotein (sRNP) particles that contain rpl7ae, FlpA and nop5, plus a guide RNA.

Involved in pre-rRNA and tRNA processing. Utilizes the methyl donor S-adenosyl-L-methionine to catalyze the site-specific 2'-hydroxyl methylation of ribose moieties in rRNA and tRNA. Site specificity is provided by a guide RNA that base pairs with the substrate. Methylation occurs at a characteristic distance from the sequence involved in base pairing with the guide RNA. In Archaeoglobus fulgidus (strain ATCC 49558 / DSM 4304 / JCM 9628 / NBRC 100126 / VC-16), this protein is Fibrillarin-like rRNA/tRNA 2'-O-methyltransferase.